An 804-amino-acid chain; its full sequence is Leucine--tRNA ligase (804 aa).

Residues 39 to 50 (PFPSGKGLHVGH) carry the 'HIGH' region motif. Residues 573–577 (KMSKS) carry the 'KMSKS' region motif. Lysine 576 contacts ATP.

It belongs to the class-I aminoacyl-tRNA synthetase family.

It is found in the cytoplasm. It catalyses the reaction tRNA(Leu) + L-leucine + ATP = L-leucyl-tRNA(Leu) + AMP + diphosphate. This is Leucine--tRNA ligase from Lactobacillus acidophilus (strain ATCC 700396 / NCK56 / N2 / NCFM).